Here is a 593-residue protein sequence, read N- to C-terminus: MEKLSALQEQKGELRKRLSYTTHKLEKLETEFDSTRHYLEIELRRAQEELEKVTEKLRRIQSNYMALQRINQELEDKLYRMGQHYEEEKRALSHEIVALNSHLLEAKVTIDKLSEDNELYRKDCNLAAQLLQCSQTYGRVHKVSELPSDFQERVSLHMEKHGCSLPSPLCHPAYADSVPTCVIAKVLEKPDPASLSSRLSDASARDLAFCDGVEKPGPRPPYKGDIYCSDTALYCPEERRRDRRPSVDAPVTDVGFLRAQNSTDSAAEEEEEAEAAAFPAGFQHEAFPSYAGSLPTSSSYSSFSATSEEKEHAQASTLTASQQAIYLNSRDELFDRKPPATTYEGSPRFAKATAAVAAPLEAEVAPGFGRTMSPYPAETFRFPASPGPQQALMPPNLWSLRAKPGTARLPGEDMRGQWRPLSVEDIGAYSYPVSAAGRASPCSFSERYYGGAGGSPGKKADGRASPLYASYKADSFSEGDDLSQGHLAEPCFLRAGGDLSLSPGRSADPLPGYAPSEGGDGDRLGVQLCGTASSPEPEQGSRDSLEPSSMEASPEMHPAARLSPQQAFPRTGGSGLSRKDSLTKAQLYGTLLN.

At M1 the chain carries N-acetylmethionine. At Y137 the chain carries Phosphotyrosine. S200, S229, S246, S265, S346, and S373 each carry phosphoserine. R381 is subject to Asymmetric dimethylarginine. Phosphoserine occurs at positions 455, 465, 475, 477, 500, 502, 506, 553, and 563. The tract at residues 499–593 (LSLSPGRSAD…KAQLYGTLLN (95 aa)) is disordered.

As to quaternary structure, interacts with DLG4 and DLGAP1 and forms a ternary complex.

The protein resides in the cytoplasm. It localises to the membrane. Functionally, may sustain the structure of the postsynaptic density (PSD). The polypeptide is Brain-enriched guanylate kinase-associated protein (BEGAIN) (Homo sapiens (Human)).